We begin with the raw amino-acid sequence, 474 residues long: Uronate isomerase (474 aa).

Belongs to the metallo-dependent hydrolases superfamily. Uronate isomerase family.

The catalysed reaction is D-glucuronate = D-fructuronate. It carries out the reaction aldehydo-D-galacturonate = keto-D-tagaturonate. The protein operates within carbohydrate metabolism; pentose and glucuronate interconversion. This Photorhabdus laumondii subsp. laumondii (strain DSM 15139 / CIP 105565 / TT01) (Photorhabdus luminescens subsp. laumondii) protein is Uronate isomerase.